A 219-amino-acid polypeptide reads, in one-letter code: MDATDQGKSTSTTAAQAAPGKAAPRRGIGRDALVGGICGAVVVLMIGASYAAVPFYNWFCRATGFNGTTQVATAAPSAAPLARRIGVRFDANVAGGLPWKFEPEKTEIEVAIGEVVTVYYTVTNQSARTTMAQAAYNVTPLTSGAYFQKINCFCFTEQTMAPGETREMPVVFYVDPAITADHENDGLNTITLSYTFYPVRDAAPKPVAAGEPDKPRGSL.

The segment covering 1 to 13 (MDATDQGKSTSTT) has biased composition (polar residues). Positions 1 to 24 (MDATDQGKSTSTTAAQAAPGKAAP) are disordered. The Cytoplasmic segment spans residues 1–29 (MDATDQGKSTSTTAAQAAPGKAAPRRGIG). Positions 14–24 (AAQAAPGKAAP) are enriched in low complexity. The helical; Signal-anchor for type II membrane protein transmembrane segment at 30-52 (RDALVGGICGAVVVLMIGASYAA) threads the bilayer. Residues 53–219 (VPFYNWFCRA…GEPDKPRGSL (167 aa)) are Periplasmic-facing.

Belongs to the COX11/CtaG family.

It is found in the cell inner membrane. Exerts its effect at some terminal stage of cytochrome c oxidase synthesis, probably by being involved in the insertion of the copper B into subunit I. The sequence is that of Cytochrome c oxidase assembly protein CtaG from Bradyrhizobium sp. (strain ORS 278).